A 310-amino-acid chain; its full sequence is Glucan endo-1,3-beta-glucosidase GI (310 aa).

Glutamate 96 serves as the catalytic Proton donor. Glutamate 234 acts as the Nucleophile in catalysis.

This sequence belongs to the glycosyl hydrolase 17 family. As to quaternary structure, monomer. Young leaves and roots.

The enzyme catalyses Hydrolysis of (1-&gt;3)-beta-D-glucosidic linkages in (1-&gt;3)-beta-D-glucans.. Functionally, may provide a degree of protection against microbial invasion of germinated barley grain through its ability to degrade fungal cell wall polysaccharides. Does not hydrolyze (1,3;1,4)-beta-D-glucans, (1,6)-beta-D-glucan, CM-cellulose, insoluble (1,3)-beta-D-glucans or aryl beta-D-glycosides. This chain is Glucan endo-1,3-beta-glucosidase GI, found in Hordeum vulgare (Barley).